The chain runs to 126 residues: Phosphoribosyl-AMP cyclohydrolase (126 aa).

Asp76 lines the Mg(2+) pocket. Cys77 is a binding site for Zn(2+). Residues Asp78 and Asp80 each contribute to the Mg(2+) site. Zn(2+)-binding residues include Cys94 and Cys101.

The protein belongs to the PRA-CH family. In terms of assembly, homodimer. Mg(2+) is required as a cofactor. Zn(2+) serves as cofactor.

It is found in the cytoplasm. It carries out the reaction 1-(5-phospho-beta-D-ribosyl)-5'-AMP + H2O = 1-(5-phospho-beta-D-ribosyl)-5-[(5-phospho-beta-D-ribosylamino)methylideneamino]imidazole-4-carboxamide. It functions in the pathway amino-acid biosynthesis; L-histidine biosynthesis; L-histidine from 5-phospho-alpha-D-ribose 1-diphosphate: step 3/9. Catalyzes the hydrolysis of the adenine ring of phosphoribosyl-AMP. In Nitratidesulfovibrio vulgaris (strain ATCC 29579 / DSM 644 / CCUG 34227 / NCIMB 8303 / VKM B-1760 / Hildenborough) (Desulfovibrio vulgaris), this protein is Phosphoribosyl-AMP cyclohydrolase.